We begin with the raw amino-acid sequence, 187 residues long: Calcium and integrin-binding family member 2 (187 aa).

EF-hand domains lie at 66–101, 103–138, and 144–179; these read RENP…LCES, PREL…LTKS, and EVVL…APDF. Ca(2+) contacts are provided by D116, N118, D120, D127, D157, D159, D161, K163, and D168.

As to quaternary structure, monomer. Homodimer. Interacts with WHRN and MYO7A. Interacts with ITGA2B (via C-terminus cytoplasmic tail region); this interaction is stabilized/increased in a calcium and magnesium-dependent manner. Interacts with ITGA7 (via C-terminus cytoplasmic tail region); this interaction is stabilized/increased in a calcium and magnesium-dependent manner. Interacts with TMC1. Interacts with TMC2. Interacts with PIEZO1. As to expression, expressed in inner and outer segments of photoreceptor cells, as well as in the pigmented epithelium. Also observed in the inner and outer plexiform layers and in the ganglion cell layer (at protein level). Expressed in sensory hair cell stereocilia, with expression mainly at the basal body of the kinocilium and in the hair bundle stereocilia; and the apical surface of hair cells (at protein level). Located in the tip region of the stereocilia and at the apical surface of hair cells around the cuticular plate (at protein level). Not expressed in the hair bundles of the vestibular hair cells. Strongly expressed in skeletal muscles, brain, kidney and liver. Expressed in the skeletal muscle, retina and cochlea. Expressed in megakaryocytes and endothelial cells. Expressed in heart, spleen, lung, and inner ear. In the inner ear, expressed in the vestibule, basilar membrane and spiral ganglion cells. Expressed in the supporting cells in both the organ of Corti and the vestibular sensory epithelia.

Its subcellular location is the cytoplasm. The protein localises to the cell projection. It is found in the stereocilium. It localises to the photoreceptor inner segment. The protein resides in the cilium. Its subcellular location is the photoreceptor outer segment. The protein localises to the cell membrane. It is found in the sarcolemma. Its function is as follows. Calcium- and integrin-binding protein that plays a role in intracellular calcium homeostasis. Acts as an auxiliary subunit of the sensory mechanoelectrical transduction (MET) channel in hair cells. Essential for mechanoelectrical transduction (MET) currents in auditory hair cells and thereby required for hearing. Regulates the function of hair cell mechanotransduction by controlling the distribution of transmembrane channel-like proteins TMC1 and TMC2, and by regulating the function of the MET channels in hair cells. Required for the maintenance of auditory hair cell stereocilia bundle morphology and function and for hair-cell survival in the cochlea. Critical for proper photoreceptor cell maintenance and function. Plays a role in intracellular calcium homeostasis by decreasing ATP-induced calcium release. Seems to be dispensable for vestibular functions. In Mus musculus (Mouse), this protein is Calcium and integrin-binding family member 2 (Cib2).